Here is a 263-residue protein sequence, read N- to C-terminus: Renal glandular kallikrein (263 aa).

An N-terminal signal peptide occupies residues 1 to 18 (MWFLILFLALFLGGIDAA). Positions 19–24 (PPVQSR) are cleaved as a propeptide — activation peptide. Positions 25–260 (IIGGFNCEKN…YRSWIKDVMA (236 aa)) constitute a Peptidase S1 domain. Disulfide bonds link Cys31/Cys175, Cys50/Cys66, Cys153/Cys221, Cys186/Cys200, and Cys211/Cys236. The active-site Charge relay system is the His65. A glycan (N-linked (GlcNAc...) asparagine) is linked at Asn102. Asp121 (charge relay system) is an active-site residue. The active-site Charge relay system is Ser215.

It belongs to the peptidase S1 family. Kallikrein subfamily.

It carries out the reaction Preferential cleavage of Arg-|-Xaa bonds in small molecule substrates. Highly selective action to release kallidin (lysyl-bradykinin) from kininogen involves hydrolysis of Met-|-Xaa or Leu-|-Xaa.. Glandular kallikreins cleave Met-Lys and Arg-Ser bonds in kininogen to release Lys-bradykinin. In Mastomys natalensis (African soft-furred rat), this protein is Renal glandular kallikrein.